The primary structure comprises 141 residues: Acetyltransferase ECA0875 (141 aa).

Residues 1-141 enclose the N-acetyltransferase domain; the sequence is MEIRIFRQDD…GKRLIEDREY (141 aa).

This sequence belongs to the acetyltransferase family. YpeA subfamily.

The chain is Acetyltransferase ECA0875 from Pectobacterium atrosepticum (strain SCRI 1043 / ATCC BAA-672) (Erwinia carotovora subsp. atroseptica).